Consider the following 251-residue polypeptide: tRNA pseudouridine synthase A 1 (251 aa).

Catalysis depends on Asp52, which acts as the Nucleophile. Tyr110 contributes to the substrate binding site.

The protein belongs to the tRNA pseudouridine synthase TruA family. In terms of assembly, homodimer.

It catalyses the reaction uridine(38/39/40) in tRNA = pseudouridine(38/39/40) in tRNA. Its function is as follows. Formation of pseudouridine at positions 38, 39 and 40 in the anticodon stem and loop of transfer RNAs. This Desulfotalea psychrophila (strain LSv54 / DSM 12343) protein is tRNA pseudouridine synthase A 1.